The primary structure comprises 92 residues: Protein LSO2 (92 aa).

Basic and acidic residues-rich tracts occupy residues Met1–Ala10 and Glu38–Ala72. The interval Met1 to Lys92 is disordered. Residues Ala17–Gln80 adopt a coiled-coil conformation.

Belongs to the CCDC124 family. In terms of assembly, associates with translationally inactive ribosomes in the nonrotated state. LSO2 bridges the decoding sites of the small with the GTPase activating center (GAC) of the large subunit. This position allows accommodation of the DOM34-dependent ribosome recycling system, which splits LSO2-containing ribosomes.

The protein localises to the nucleus. It localises to the cytoplasm. Its function is as follows. Ribosome-binding protein involved in ribosome hibernation by associating with translationally inactive ribosomes. Required for translational recovery after starvation from stationary phase. May facilitate rapid translation reactivation by stabilizing the recycling-competent state of inactive ribosomes. The chain is Protein LSO2 from Saccharomyces cerevisiae (strain ATCC 204508 / S288c) (Baker's yeast).